Consider the following 145-residue polypeptide: Succinate dehydrogenase assembly factor 2, mitochondrial (145 aa).

It belongs to the SDHAF2 family. Interacts with the flavoprotein subunit within the SDH catalytic dimer.

Its subcellular location is the mitochondrion matrix. Plays an essential role in the assembly of succinate dehydrogenase (SDH), an enzyme complex (also referred to as respiratory complex II) that is a component of both the tricarboxylic acid (TCA) cycle and the mitochondrial electron transport chain, and which couples the oxidation of succinate to fumarate with the reduction of ubiquinone (coenzyme Q) to ubiquinol. Required for flavinylation (covalent attachment of FAD) of the flavoprotein subunit of the SDH catalytic dimer. This is Succinate dehydrogenase assembly factor 2, mitochondrial from Yarrowia lipolytica (strain CLIB 122 / E 150) (Yeast).